The following is a 195-amino-acid chain: Guanylate kinase (195 aa).

One can recognise a Guanylate kinase-like domain in the interval 10 to 189; it reads GRLIVFSAPS…TVDAVATRIA (180 aa). Residue 17–24 coordinates ATP; it reads APSGTGKS.

This sequence belongs to the guanylate kinase family.

The protein localises to the cytoplasm. It catalyses the reaction GMP + ATP = GDP + ADP. Its function is as follows. Essential for recycling GMP and indirectly, cGMP. In Chlorobaculum tepidum (strain ATCC 49652 / DSM 12025 / NBRC 103806 / TLS) (Chlorobium tepidum), this protein is Guanylate kinase.